Reading from the N-terminus, the 84-residue chain is Small ribosomal subunit protein bS16 (84 aa).

Belongs to the bacterial ribosomal protein bS16 family.

The polypeptide is Small ribosomal subunit protein bS16 (Cupriavidus necator (strain ATCC 17699 / DSM 428 / KCTC 22496 / NCIMB 10442 / H16 / Stanier 337) (Ralstonia eutropha)).